The sequence spans 640 residues: Uromodulin (640 aa).

The first 24 residues, 1-24 (MGQPSLTWMLMVVVASWFITTAAT), serve as a signal peptide directing secretion. In terms of domain architecture, EGF-like 1 spans 28-64 (EARWCSECHSNATCTEDEAVTTCTCQEGFTGDGLTCV). 21 cysteine pairs are disulfide-bonded: cysteine 32–cysteine 41, cysteine 35–cysteine 50, cysteine 52–cysteine 63, cysteine 69–cysteine 83, cysteine 77–cysteine 92, cysteine 94–cysteine 106, cysteine 112–cysteine 126, cysteine 120–cysteine 135, cysteine 137–cysteine 148, cysteine 150–cysteine 161, cysteine 155–cysteine 170, cysteine 174–cysteine 267, cysteine 195–cysteine 282, cysteine 217–cysteine 255, cysteine 223–cysteine 287, cysteine 248–cysteine 256, cysteine 297–cysteine 306, cysteine 300–cysteine 315, cysteine 317–cysteine 347, cysteine 335–cysteine 425, and cysteine 366–cysteine 389. N-linked (GlcNAc...) asparagine glycosylation occurs at asparagine 38. The 43-residue stretch at 65–107 (DLDECAIPGAHNCSANSSCVNTPGSFSCVCPEGFRLSPGLGCT) folds into the EGF-like 2; calcium-binding domain. Asparagine 76 and asparagine 80 each carry an N-linked (GlcNAc...) asparagine glycan. Residues 108–149 (DVDECAEPGLSHCHALATCVNVVGSYLCVCPAGYRGDGWHCE) form the EGF-like 3; calcium-binding domain. The segment at 150–171 (CSPGSCGPGLDCVPEGDALVCA) is beta hairpin. The segment at 172–291 (DPCQAHRTLD…CHLAYCTDPS (120 aa)) is D10C. N-linked (GlcNAc...) (complex) asparagine glycosylation is present at asparagine 232. N-linked (GlcNAc...) (high mannose) asparagine glycosylation is present at asparagine 275. In terms of domain architecture, EGF-like 4 spans 292–323 (SVEGTCEECSIDEDCKSNNGRWHCQCKQDFNI). N-linked (GlcNAc...) (complex) asparagine glycosylation occurs at asparagine 322. The ZP-N stretch occupies residues 334–429 (ECGANDMKVS…KINFACSYPL (96 aa)). One can recognise a ZP domain in the interval 334-589 (ECGANDMKVS…PTCSGTRFRS (256 aa)). N-linked (GlcNAc...) (complex) asparagine glycosylation occurs at asparagine 396. A flexible ZP-N/ZP-C linker; important for secretion and polymerization into filaments region spans residues 430–453 (DMKVSLKTALQPMVSALNIRVGGT). The tract at residues 454–465 (GMFTVRMALFQT) is internal hydrophobic patch (IHP). The interval 454–589 (GMFTVRMALF…PTCSGTRFRS (136 aa)) is ZP-C. Disulfide bonds link cysteine 506-cysteine 566, cysteine 527-cysteine 582, and cysteine 571-cysteine 578. N-linked (GlcNAc...) (complex) asparagine; alternate glycosylation occurs at asparagine 513. Asparagine 513 carries N-linked (GlcNAc...) (high mannose) asparagine; alternate glycosylation. The tract at residues 586-589 (RFRS) is essential for cleavage by HPN. The segment at 598–606 (VLNLGPITR) is external hydrophobic patch (EHP); regulates polymerization into filaments. Serine 614 carries GPI-anchor amidated serine lipidation. A propeptide spans 615–640 (RAFSSLGLLKVWLPLLLSATLTLTFQ) (removed in mature form).

In terms of assembly, homodimer that then polymerizes into long filaments. The filaments can additionally assemble laterally to form a sheet. The filaments consist of a zigzag-shaped backbone with laterally protruding arms which interact with bacterial adhesin fimH. Two fimH molecules can bind to a single UMOD monomer. In terms of processing, N-glycosylated. N-glycan heterogeneity at Asn-232: Hex7HexNAc6 (major) and dHex1Hex7HexNAc6 (minor); at Asn-322: dHex1Hex6HexNAc5 (minor), dHex1Hex7HexNAc6 (major) and dHex1Hex8HexNAc7 (minor); at Asn-396: Hex6HexNAc5 (major), dHex1Hex6HexNAc5 (minor) and Hex7HexNAc6 (minor). Glycosylated Asn-232 interacts with E.coli adhesin fimH. Other complex glycosylation sites may serve as binding sites for proteins from other bacteria inclduding K.pneumoniae, P.aeruginosa and S.mitis. Post-translationally, proteolytically cleaved at a conserved C-terminal proteolytic cleavage site to generate the secreted form found in urine. This cleavage is catalyzed by HPN. In terms of tissue distribution, expressed in the tubular cells of the kidney. Most abundant protein in normal urine (at protein level). Synthesized exclusively in the kidney. Expressed exclusively by epithelial cells of the thick ascending limb of Henle's loop (TALH) and of distal convoluted tubule lumen.

It is found in the apical cell membrane. It localises to the basolateral cell membrane. Its subcellular location is the cell projection. The protein localises to the cilium membrane. The protein resides in the secreted. Functionally, functions in biogenesis and organization of the apical membrane of epithelial cells of the thick ascending limb of Henle's loop (TALH), where it promotes formation of complex filamentous gel-like structure that may play a role in the water barrier permeability. May serve as a receptor for binding and endocytosis of cytokines (IL-1, IL-2) and TNF. Facilitates neutrophil migration across renal epithelia. Its function is as follows. In the urine, may contribute to colloid osmotic pressure, retards passage of positively charged electrolytes, and inhibits formation of liquid containing supersaturated salts and subsequent formation of salt crystals. Protects against urinary tract infections by binding to type 1 fimbriated E.coli. Binds to bacterial adhesin fimH which mediates the stable formation of bacterial aggregates, prevents the binding of E.coli to uroplakins UPK1A and UPK1B which act as urothelial receptors for type I fimbriae, and allows for pathogen clearance through micturation. Also promotes aggregation of other bacteria including K.pneumoniae, P.aeruginosa and S.mitis and so may also protect against other uropathogens. This chain is Uromodulin (UMOD), found in Homo sapiens (Human).